The sequence spans 151 residues: uncharacterized protein (151 aa).

This is an uncharacterized protein from Saccharomyces cerevisiae (strain ATCC 204508 / S288c) (Baker's yeast).